The following is a 363-amino-acid chain: Large ribosomal subunit protein uL4B (363 aa).

Residues Pro-280–Asn-363 are C-terminal-extended nuclear localization signal.

The protein belongs to the universal ribosomal protein uL4 family. As to quaternary structure, component of the large ribosomal subunit (LSU). Mature yeast ribosomes consist of a small (40S) and a large (60S) subunit. The 40S small subunit contains 1 molecule of ribosomal RNA (18S rRNA) and at least 33 different proteins. The large 60S subunit contains 3 rRNA molecules (25S, 5.8S and 5S rRNA) and at least 46 different proteins. uL4 is associated with the polypeptide exit tunnel. uL4 interacts with its chaperone ACL4 and the nuclear import receptor KAP104.

It localises to the cytoplasm. Its function is as follows. Component of the ribosome, a large ribonucleoprotein complex responsible for the synthesis of proteins in the cell. The small ribosomal subunit (SSU) binds messenger RNAs (mRNAs) and translates the encoded message by selecting cognate aminoacyl-transfer RNA (tRNA) molecules. The large subunit (LSU) contains the ribosomal catalytic site termed the peptidyl transferase center (PTC), which catalyzes the formation of peptide bonds, thereby polymerizing the amino acids delivered by tRNAs into a polypeptide chain. The nascent polypeptides leave the ribosome through a tunnel in the LSU and interact with protein factors that function in enzymatic processing, targeting, and the membrane insertion of nascent chains at the exit of the ribosomal tunnel. The sequence is that of Large ribosomal subunit protein uL4B (rpl401) from Schizosaccharomyces pombe (strain 972 / ATCC 24843) (Fission yeast).